We begin with the raw amino-acid sequence, 184 residues long: MDTSLISIIIIAIALAMDAFSVSLTKGFTQKNLTKSQILYYGLFFGFFQFIMPVIGYICGTTISSFVSTVAPWIAFFLLLAIGLNMIRESLDSDDEYIMDTFSFKELTLLAVATSIDAFAVGITFALLNMSLLLPCTIIGIVAFIFSISGIFIGKKLGNYFGDKFEILGGAVLILIGIKILLGY.

6 consecutive transmembrane segments (helical) span residues 5–25 (LISI…VSLT), 38–58 (ILYY…IGYI), 67–87 (VSTV…LNMI), 107–127 (LTLL…TFAL), 133–153 (LLPC…GIFI), and 164–184 (KFEI…LLGY).

Belongs to the MntP (TC 9.B.29) family.

The protein resides in the cell membrane. Its function is as follows. Probably functions as a manganese efflux pump. The polypeptide is Putative manganese efflux pump MntP (Methanobrevibacter smithii (strain ATCC 35061 / DSM 861 / OCM 144 / PS)).